The primary structure comprises 301 residues: Ribosomal RNA small subunit methyltransferase H (301 aa).

S-adenosyl-L-methionine is bound by residues 31-33, Asp49, Phe76, Asp97, and Gln104; that span reads GGY.

It belongs to the methyltransferase superfamily. RsmH family.

The protein localises to the cytoplasm. It carries out the reaction cytidine(1402) in 16S rRNA + S-adenosyl-L-methionine = N(4)-methylcytidine(1402) in 16S rRNA + S-adenosyl-L-homocysteine + H(+). Specifically methylates the N4 position of cytidine in position 1402 (C1402) of 16S rRNA. The sequence is that of Ribosomal RNA small subunit methyltransferase H from Ehrlichia ruminantium (strain Welgevonden).